Consider the following 483-residue polypeptide: Glutamyl-tRNA(Gln) amidotransferase subunit A (483 aa).

Active-site charge relay system residues include Lys-75 and Ser-150. The active-site Acyl-ester intermediate is Ser-174.

It belongs to the amidase family. GatA subfamily. Heterotrimer of A, B and C subunits.

The enzyme catalyses L-glutamyl-tRNA(Gln) + L-glutamine + ATP + H2O = L-glutaminyl-tRNA(Gln) + L-glutamate + ADP + phosphate + H(+). In terms of biological role, allows the formation of correctly charged Gln-tRNA(Gln) through the transamidation of misacylated Glu-tRNA(Gln) in organisms which lack glutaminyl-tRNA synthetase. The reaction takes place in the presence of glutamine and ATP through an activated gamma-phospho-Glu-tRNA(Gln). In Deinococcus geothermalis (strain DSM 11300 / CIP 105573 / AG-3a), this protein is Glutamyl-tRNA(Gln) amidotransferase subunit A.